Consider the following 250-residue polypeptide: Probable transcriptional regulatory protein DIP1378 (250 aa).

The tract at residues 1-22 is disordered; the sequence is MSGHSKWATTKHKKAANDAKRG.

It belongs to the TACO1 family.

It localises to the cytoplasm. The chain is Probable transcriptional regulatory protein DIP1378 from Corynebacterium diphtheriae (strain ATCC 700971 / NCTC 13129 / Biotype gravis).